The sequence spans 601 residues: Glutathione-regulated potassium-efflux system protein KefB (601 aa).

A run of 13 helical transmembrane segments spans residues 4 to 24 (SDFLLAGVLFLFAAVAAVPLA), 29 to 49 (IGAVLGYLLAGIAIGPWGLGF), 55 to 75 (EILHFSELGVVFLMFIIGLEL), 87 to 107 (IFGVGAAQVLLSAALLAGLLM), 115 to 135 (AAVVGGIGLAMSSTAMALQLM), 152 to 172 (VLLFQDLAVIPALALVPLLAG), 177 to 197 (HFDWMKIGMKVLAFVGMLIGG), 207 to 227 (FIAASGVREVFTAATLLLVLG), 230 to 250 (LFMDALGLSMALGTFIAGVLL), 268 to 288 (GLLLGLFFISVGMSLNLGVLY), 291 to 311 (LLWVVISVVVLVAVKIFVLYL), 324 to 344 (MQFAGVLSQGGEFAFVLFSSA), and 356 to 376 (ALLLVTVTLSMMTTPLLMKLV). Positions 400 to 519 (KPQVIVVGFG…AGVTQFSRET (120 aa)) constitute an RCK N-terminal domain.

Belongs to the monovalent cation:proton antiporter 2 (CPA2) transporter (TC 2.A.37) family. KefB subfamily. In terms of assembly, interacts with the regulatory subunit KefG.

It localises to the cell inner membrane. Its function is as follows. Pore-forming subunit of a potassium efflux system that confers protection against electrophiles. Catalyzes K(+)/H(+) antiport. In Escherichia coli O127:H6 (strain E2348/69 / EPEC), this protein is Glutathione-regulated potassium-efflux system protein KefB.